Consider the following 125-residue polypeptide: Fluoride-specific ion channel FluC (125 aa).

4 consecutive transmembrane segments (helical) span residues 6–26 (AWIALAGAGGTLSRYALSGLV), 36–56 (WGTWVVNGLGCFLFGMIWALA), 68–88 (FIVLTGFMGAFTTFSTFAFEA), and 97–117 (WLLAAIHLIGQNSLGLVCVFL). Residues Gly76 and Thr79 each contribute to the Na(+) site.

The protein belongs to the fluoride channel Fluc/FEX (TC 1.A.43) family.

It localises to the cell inner membrane. It catalyses the reaction fluoride(in) = fluoride(out). With respect to regulation, na(+) is not transported, but it plays an essential structural role and its presence is essential for fluoride channel function. Its function is as follows. Fluoride-specific ion channel. Important for reducing fluoride concentration in the cell, thus reducing its toxicity. In Nitrosococcus oceani (strain ATCC 19707 / BCRC 17464 / JCM 30415 / NCIMB 11848 / C-107), this protein is Fluoride-specific ion channel FluC.